Reading from the N-terminus, the 132-residue chain is Small ribosomal subunit protein uS19 (132 aa).

It belongs to the universal ribosomal protein uS19 family. Part of the 30S ribosomal subunit.

Functionally, protein S19 forms a complex with S13 that binds strongly to the 16S ribosomal RNA. The protein is Small ribosomal subunit protein uS19 of Pyrococcus furiosus (strain ATCC 43587 / DSM 3638 / JCM 8422 / Vc1).